The sequence spans 285 residues: 4-hydroxybenzoate octaprenyltransferase (285 aa).

7 helical membrane-spanning segments follow: residues 20 to 37 (IGIYLVLWPALWALWLAA), 96 to 116 (FFFVLCLLAFGLVLFLNPFTI), 138 to 158 (WPQAFLGAAFAWAIPMAFAAI), 166 to 186 (AWVIFGVTLVWALVYDTAYAV), 211 to 231 (IIGFFQAIMLLGFLWIGDLFG), 234 to 254 (WLYYGSVLIAAGFFVYHQYLL), and 262 to 282 (AFKAFLNNHWVGLVILIGIML).

This sequence belongs to the UbiA prenyltransferase family. It depends on Mg(2+) as a cofactor.

Its subcellular location is the cell inner membrane. It catalyses the reaction all-trans-octaprenyl diphosphate + 4-hydroxybenzoate = 4-hydroxy-3-(all-trans-octaprenyl)benzoate + diphosphate. The protein operates within cofactor biosynthesis; ubiquinone biosynthesis. Catalyzes the prenylation of para-hydroxybenzoate (PHB) with an all-trans polyprenyl group. Mediates the second step in the final reaction sequence of ubiquinone-8 (UQ-8) biosynthesis, which is the condensation of the polyisoprenoid side chain with PHB, generating the first membrane-bound Q intermediate 3-octaprenyl-4-hydroxybenzoate. This Hydrogenovibrio crunogenus (strain DSM 25203 / XCL-2) (Thiomicrospira crunogena) protein is 4-hydroxybenzoate octaprenyltransferase.